A 616-amino-acid polypeptide reads, in one-letter code: Protein LNK1 (616 aa).

Disordered stretches follow at residues 72–112, 361–398, 410–434, and 567–616; these read GKNP…HGFN, ESKS…GPTV, ANLL…KTDS, and SSLS…SDNN. Residues 371 to 395 are compositionally biased toward polar residues; that stretch reads KPSPSSASNESYTSNHAQSIESLQG. Residues 567-577 show a composition bias toward low complexity; it reads SSLSSDNNVLS. The segment covering 594–608 has biased composition (basic and acidic residues); it reads RIEKQEETTELRPEA.

In terms of assembly, interacts with CCA1, LHY, REV4 and REV8, but not with PRR7 or PRR9. As to expression, expressed in roots, stems, leaves, seedlings, cotyledons, inflorescences and siliques. Highest expression in root tips, young leaves and vasculatur tissues.

Its subcellular location is the nucleus. Its function is as follows. Transcriptional coactivator necessary for expression of the clock genes PRR5 and TOC1. Antagonizes REV8 function in the regulation of anthocyanin accumulation. Involved in red light input to the clock. Activates clock-controlled genes with afternoon peak. Mediates light inhibition of hypocotyl elongation. This Arabidopsis thaliana (Mouse-ear cress) protein is Protein LNK1.